A 649-amino-acid chain; its full sequence is Centrosomal protein of 63 kDa-A (649 aa).

Coiled coils occupy residues 19–185 and 222–556; these read DSCE…YQHQ and EEEL…DAAS. S560 is modified (phosphoserine; by atm and atr). Residues 612–645 adopt a coiled-coil conformation; it reads FLQEEEQRSHELLQRLNAHIEELKQESQRTVEHF.

It belongs to the CEP63 family. Post-translationally, phosphorylation at Ser-560 by atm and atr promotes its delocalization from the centrosome and impairs its ability to promote centrosome dependent spindle assembly.

It is found in the cytoplasm. The protein resides in the cytoskeleton. The protein localises to the microtubule organizing center. It localises to the centrosome. Its subcellular location is the centriole. Its function is as follows. Required for normal spindle assembly. Plays a key role in mother-centriole-dependent centriole duplication. Plays a role in DNA damage response. Following DNA damage, such as double-strand breaks (DSBs), is removed from centrosomes; this leads to the inactivation of spindle assembly and delay in mitotic progression. This Xenopus laevis (African clawed frog) protein is Centrosomal protein of 63 kDa-A (cep63-a).